The chain runs to 424 residues: ATP synthase subunit beta, mitochondrial (424 aa).

A mitochondrion-targeting transit peptide spans 1–60 (MFRLSSGLLKGGACASRSRIPQLGRSLYSTATSAGADKTQGKIHTVIGAVVDVQFNHGRL). ATP-binding positions include 187–194 (GGAGVGKT), 188–195 (GAGVGKTV), 219–220 (ER), and tyrosine 374.

This sequence belongs to the ATPase alpha/beta chains family. In terms of assembly, F-type ATPases have 2 components, CF(1) - the catalytic core - and CF(0) - the membrane proton channel. CF(1) has five subunits: alpha(3), beta(3), gamma(1), delta(1), epsilon(1). CF(0) has three main subunits: a, b and c.

It is found in the mitochondrion. The protein localises to the mitochondrion inner membrane. The enzyme catalyses ATP + H2O + 4 H(+)(in) = ADP + phosphate + 5 H(+)(out). Its function is as follows. ATP synthase subunit beta; part of the gene cluster that mediates the biosynthesis of citreoviridin, an inhibitor of the of F1-ATPase beta-subunit. Mitochondrial membrane ATP synthase (F(1)F(0) ATP synthase or Complex V) produces ATP from ADP in the presence of a proton gradient across the membrane which is generated by electron transport complexes of the respiratory chain. Whereas ctvA to ctvD constitute the core biosynthetic gene cluster, ctvE acts as a self-resistance gene. The sequence is that of ATP synthase subunit beta, mitochondrial from Aspergillus terreus (strain NIH 2624 / FGSC A1156).